The following is a 210-amino-acid chain: Probable GTP-binding protein EngB (210 aa).

Positions 30 to 204 constitute an EngB-type G domain; it reads QGYEVAFAGR…YKVLAGWMEL (175 aa). Residues 38 to 45, 64 to 68, 82 to 85, 149 to 152, and 182 to 185 contribute to the GTP site; these read GRSNAGKS, GRTQL, DLPG, TKAD, and LFSA. The Mg(2+) site is built by Ser45 and Thr66.

The protein belongs to the TRAFAC class TrmE-Era-EngA-EngB-Septin-like GTPase superfamily. EngB GTPase family. The cofactor is Mg(2+).

Its function is as follows. Necessary for normal cell division and for the maintenance of normal septation. This chain is Probable GTP-binding protein EngB, found in Pseudomonas putida (strain W619).